The primary structure comprises 147 residues: Large ribosomal subunit protein uL15 (147 aa).

The tract at residues 1–55 (MKLHEIAPQPGSTKRRRRVGRGVSAGQGASCGLGMRGQKSRSGTGTRPGFEGGQM) is disordered. The segment covering 23-35 (VSAGQGASCGLGM) has biased composition (gly residues).

This sequence belongs to the universal ribosomal protein uL15 family. As to quaternary structure, part of the 50S ribosomal subunit.

Its function is as follows. Binds to the 23S rRNA. The chain is Large ribosomal subunit protein uL15 from Microcystis aeruginosa (strain NIES-843 / IAM M-2473).